Reading from the N-terminus, the 91-residue chain is Potassium channel toxin Meg-beta-KTx1 (91 aa).

Positions 1–19 (MQRNLVVLLFLGMVALSSC) are cleaved as a signal peptide. Positions 20 to 27 (GLREKHFQ) are excised as a propeptide. The 38-residue stretch at 54 to 91 (QFGCPAYQGYCDDHCQDIKKQEGFCHGFKCKCGIPMGF) folds into the BetaSPN-type CS-alpha/beta domain. Intrachain disulfides connect cysteine 57/cysteine 78, cysteine 64/cysteine 83, and cysteine 68/cysteine 85.

This sequence belongs to the long chain scorpion toxin family. Class 1 subfamily. As to expression, expressed by the venom gland.

Its subcellular location is the secreted. Inhibits voltage-gated potassium channel. This chain is Potassium channel toxin Meg-beta-KTx1, found in Mesobuthus gibbosus (Mediterranean checkered scorpion).